Here is a 239-residue protein sequence, read N- to C-terminus: Tubulin beta-3 chain (239 aa).

Asn-22 contributes to the GTP binding site. The interval 207–239 is disordered; the sequence is EESNMNDLVSEYQQYQDASAEPXXEQEEDYEEA. Residues 230-239 show a composition bias toward acidic residues; that stretch reads XEQEEDYEEA.

The protein belongs to the tubulin family. As to quaternary structure, dimer of alpha and beta chains. A typical microtubule is a hollow water-filled tube with an outer diameter of 25 nm and an inner diameter of 15 nM. Alpha-beta heterodimers associate head-to-tail to form protofilaments running lengthwise along the microtubule wall with the beta-tubulin subunit facing the microtubule plus end conferring a structural polarity. Microtubules usually have 13 protofilaments but different protofilament numbers can be found in some organisms and specialized cells. Mg(2+) serves as cofactor.

The protein resides in the cytoplasm. It is found in the cytoskeleton. In terms of biological role, tubulin is the major constituent of microtubules, a cylinder consisting of laterally associated linear protofilaments composed of alpha- and beta-tubulin heterodimers. Microtubules grow by the addition of GTP-tubulin dimers to the microtubule end, where a stabilizing cap forms. Below the cap, tubulin dimers are in GDP-bound state, owing to GTPase activity of alpha-tubulin. The chain is Tubulin beta-3 chain (TUBB3) from Anemia phyllitidis (Fern).